The primary structure comprises 351 residues: Thiamine-phosphate synthase (351 aa).

The tract at residues 1-128 (MKNPNIIQPE…SKIASEIRYE (128 aa)) is unknown. The interval 129–351 (IYTLEIEILN…IIIKELSHEN (223 aa)) is thiamine-phosphate synthase. 4-amino-2-methyl-5-(diphosphooxymethyl)pyrimidine-binding positions include 180 to 184 (QHRFK) and Asn-212. The Mg(2+) site is built by Asn-213 and Asp-232. Position 251 (Ser-251) interacts with 4-amino-2-methyl-5-(diphosphooxymethyl)pyrimidine. 277 to 279 (TLT) lines the 2-[(2R,5Z)-2-carboxy-4-methylthiazol-5(2H)-ylidene]ethyl phosphate pocket. Lys-280 lines the 4-amino-2-methyl-5-(diphosphooxymethyl)pyrimidine pocket. 2-[(2R,5Z)-2-carboxy-4-methylthiazol-5(2H)-ylidene]ethyl phosphate-binding positions include Gly-307 and 327–328 (VS).

This sequence belongs to the thiamine-phosphate synthase family.

The enzyme catalyses 2-[(2R,5Z)-2-carboxy-4-methylthiazol-5(2H)-ylidene]ethyl phosphate + 4-amino-2-methyl-5-(diphosphooxymethyl)pyrimidine + 2 H(+) = thiamine phosphate + CO2 + diphosphate. The catalysed reaction is 2-(2-carboxy-4-methylthiazol-5-yl)ethyl phosphate + 4-amino-2-methyl-5-(diphosphooxymethyl)pyrimidine + 2 H(+) = thiamine phosphate + CO2 + diphosphate. It catalyses the reaction 4-methyl-5-(2-phosphooxyethyl)-thiazole + 4-amino-2-methyl-5-(diphosphooxymethyl)pyrimidine + H(+) = thiamine phosphate + diphosphate. It participates in cofactor biosynthesis; thiamine diphosphate biosynthesis; thiamine phosphate from 4-amino-2-methyl-5-diphosphomethylpyrimidine and 4-methyl-5-(2-phosphoethyl)-thiazole: step 1/1. Condenses 4-methyl-5-(beta-hydroxyethyl)thiazole monophosphate (THZ-P) and 2-methyl-4-amino-5-hydroxymethyl pyrimidine pyrophosphate (HMP-PP) to form thiamine monophosphate (TMP). This is Thiamine-phosphate synthase from Prochlorococcus marinus subsp. pastoris (strain CCMP1986 / NIES-2087 / MED4).